The chain runs to 103 residues: Large ribosomal subunit protein bL21 (103 aa).

It belongs to the bacterial ribosomal protein bL21 family. Part of the 50S ribosomal subunit. Contacts protein L20.

Functionally, this protein binds to 23S rRNA in the presence of protein L20. This is Large ribosomal subunit protein bL21 from Borreliella burgdorferi (strain ZS7) (Borrelia burgdorferi).